We begin with the raw amino-acid sequence, 110 residues long: Large ribosomal subunit protein uL22 (110 aa).

It belongs to the universal ribosomal protein uL22 family. Part of the 50S ribosomal subunit.

In terms of biological role, this protein binds specifically to 23S rRNA; its binding is stimulated by other ribosomal proteins, e.g. L4, L17, and L20. It is important during the early stages of 50S assembly. It makes multiple contacts with different domains of the 23S rRNA in the assembled 50S subunit and ribosome. Its function is as follows. The globular domain of the protein is located near the polypeptide exit tunnel on the outside of the subunit, while an extended beta-hairpin is found that lines the wall of the exit tunnel in the center of the 70S ribosome. This Oleidesulfovibrio alaskensis (strain ATCC BAA-1058 / DSM 17464 / G20) (Desulfovibrio alaskensis) protein is Large ribosomal subunit protein uL22.